The sequence spans 1130 residues: Sodium/potassium/calcium exchanger 1 (1130 aa).

Residues 1 to 419 are Extracellular-facing; that stretch reads MGKLIRMGTQ…DLFSVEDRRQ (419 aa). The tract at residues 104 to 209 is disordered; that stretch reads PSIAMEDTPN…SPTATVRDRE (106 aa). The span at 125 to 136 shows a compositional bias: polar residues; the sequence is LKNSYSPTTAGT. Residues 170-187 are compositionally biased toward basic and acidic residues; sequence PRGERKNSSPTHAREKGR. Residues N176 and N273 are each glycosylated (N-linked (GlcNAc...) asparagine). Residues 274 to 295 are disordered; the sequence is ISTTPQGAVPQHTPATSEEQMT. A compositionally biased stretch (polar residues) spans 286–295; it reads TPATSEEQMT. A helical membrane pass occupies residues 420 to 440; sequence GWVVLHIFGMMYVFVALAIVC. Topologically, residues 441-464 are cytoplasmic; that stretch reads DEYFVPALGVITHKLQISEDVAGA. One copy of the Alpha-1 repeat lies at 461 to 501; the sequence is VAGATFMAAGGSAPELFTSLIGVFISHSNVGIGTIVGSAVF. A helical transmembrane segment spans residues 465-485; that stretch reads TFMAAGGSAPELFTSLIGVFI. Over 486-489 the chain is Extracellular; sequence SHSN. A helical membrane pass occupies residues 490-510; it reads VGIGTIVGSAVFNILFVIGTC. The Cytoplasmic portion of the chain corresponds to 511–530; the sequence is ALFSREILNLTWWPLFRDVS. The chain crosses the membrane as a helical span at residues 531 to 551; that stretch reads FYILDLSMLIVFFLDSFIAWW. Position 552 (E552) is a topological domain, extracellular. Residues 553 to 573 traverse the membrane as a helical segment; it reads SLLLLLAYALYVFTMKWNKQI. The Cytoplasmic portion of the chain corresponds to 574 to 938; that stretch reads ELWVKEQLSR…SLEWPDSRQK (365 aa). Residues 598 to 619 form a disordered region; sequence PSEDAVEENEQQDSKKLKLPSV. A Phosphoserine modification is found at S625. Positions 650-932 are disordered; it reads GEARPSKDKQ…ENEEPLSLEW (283 aa). A compositionally biased stretch (polar residues) spans 661–675; the sequence is SLNQEARVLSQTKAE. At T690 the chain carries Phosphothreonine. Over residues 703-715 the composition is skewed to acidic residues; it reads QEDDPGCQEDVDE. Residues 730–751 show a composition bias toward basic and acidic residues; it reads ETETEGKKDEQEGETEAERKED. Acidic residues-rich tracts occupy residues 766–782 and 802–820; these read GETE…GETE and QEGE…GETE. A compositionally biased stretch (basic and acidic residues) spans 833-855; the sequence is AESKEVEQERETEAEGKDKHEGQ. Acidic residues-rich tracts occupy residues 870–880 and 896–928; these read GETEANAEDQC and DGGD…EEPL. A helical membrane pass occupies residues 939–959; sequence QAIYLFLLPIVFPLWLTIPDV. The Extracellular segment spans residues 960–966; the sequence is RRQESRK. The helical transmembrane segment at 967–987 threads the bilayer; the sequence is FFVITFLGSIIWIAMFSYLMV. Residues 988-1002 lie on the Cytoplasmic side of the membrane; that stretch reads WWAHQVGETIGISEE. Residues 1003 to 1023 form a helical membrane-spanning segment; that stretch reads IMGLTILAAGTSIPDLITSVI. The Alpha-2 repeat unit spans residues 1010–1041; it reads AAGTSIPDLITSVIVARKGLGDMAVSSSVGSN. Topologically, residues 1024–1041 are extracellular; it reads VARKGLGDMAVSSSVGSN. The helical transmembrane segment at 1042-1062 threads the bilayer; sequence IFDITVGLPVPWLLFSLINAL. Topologically, residues 1063–1070 are cytoplasmic; the sequence is QPVPVSSN. Residues 1071–1091 traverse the membrane as a helical segment; it reads GLFCAIVLLFLMLLFVIFSIA. The Extracellular segment spans residues 1092–1099; sequence SCKWRMNK. The chain crosses the membrane as a helical span at residues 1100–1120; it reads ILGFTMFLLYFVFLVISVMLE. The Cytoplasmic portion of the chain corresponds to 1121–1130; sequence DRIISCPVSV.

This sequence belongs to the Ca(2+):cation antiporter (CaCA) (TC 2.A.19) family. SLC24A subfamily. The uncleaved signal sequence is required for efficient membrane targeting and proper membrane integration and topology.

The protein resides in the cell membrane. The enzyme catalyses Ca(2+)(out) + K(+)(out) + 4 Na(+)(in) = Ca(2+)(in) + K(+)(in) + 4 Na(+)(out). In terms of biological role, calcium, potassium:sodium antiporter that transports 1 Ca(2+) and 1 K(+) in exchange for 4 Na(+). Critical component of the visual transduction cascade, controlling the calcium concentration of outer segments during light and darkness. Light causes a rapid lowering of cytosolic free calcium in the outer segment of both retinal rod and cone photoreceptors and the light-induced lowering of calcium is caused by extrusion via this protein which plays a key role in the process of light adaptation. This Mus musculus (Mouse) protein is Sodium/potassium/calcium exchanger 1.